We begin with the raw amino-acid sequence, 406 residues long: GTPase Obg (406 aa).

The region spanning 1–159 is the Obg domain; that stretch reads MKFVDEVSIH…RDLKLELKVL (159 aa). Residues 127 to 148 are disordered; sequence NTRFKSSTNRAPRQTTPGKPGE. Residues 129 to 143 are compositionally biased toward polar residues; sequence RFKSSTNRAPRQTTP. One can recognise an OBG-type G domain in the interval 160 to 334; it reads ADVGLLGLPN…LSQDIMRYLD (175 aa). GTP-binding positions include 166-173, 191-195, 213-216, 283-286, and 315-317; these read GLPNAGKS, FTTLV, DIPG, NKMD, and SAL. 2 residues coordinate Mg(2+): Ser173 and Thr193. Residues 378–406 form a disordered region; sequence GLKNAGAADDDDFDDEEDDGDGPEIFYVP. Over residues 385–399 the composition is skewed to acidic residues; sequence ADDDDFDDEEDDGDG.

This sequence belongs to the TRAFAC class OBG-HflX-like GTPase superfamily. OBG GTPase family. As to quaternary structure, monomer. It depends on Mg(2+) as a cofactor.

Its subcellular location is the cytoplasm. Its function is as follows. An essential GTPase which binds GTP, GDP and possibly (p)ppGpp with moderate affinity, with high nucleotide exchange rates and a fairly low GTP hydrolysis rate. Plays a role in control of the cell cycle, stress response, ribosome biogenesis and in those bacteria that undergo differentiation, in morphogenesis control. This Pseudomonas paraeruginosa (strain DSM 24068 / PA7) (Pseudomonas aeruginosa (strain PA7)) protein is GTPase Obg.